The sequence spans 105 residues: Large ribosomal subunit protein bL21 (105 aa).

This sequence belongs to the bacterial ribosomal protein bL21 family. As to quaternary structure, part of the 50S ribosomal subunit. Contacts protein L20.

Its function is as follows. This protein binds to 23S rRNA in the presence of protein L20. The sequence is that of Large ribosomal subunit protein bL21 from Dictyoglomus thermophilum (strain ATCC 35947 / DSM 3960 / H-6-12).